The chain runs to 252 residues: Chitooligosaccharide deacetylase (252 aa).

Mg(2+) contacts are provided by His61 and His125.

The protein belongs to the YdjC deacetylase family. ChbG subfamily. As to quaternary structure, homodimer. It depends on Mg(2+) as a cofactor.

It is found in the cytoplasm. It catalyses the reaction N,N'-diacetylchitobiose + H2O = N-acetyl-beta-D-glucosaminyl-(1-&gt;4)-D-glucosamine + acetate. It carries out the reaction diacetylchitobiose-6'-phosphate + H2O = N'-monoacetylchitobiose-6'-phosphate + acetate. The protein operates within glycan degradation; chitin degradation. Functionally, involved in the degradation of chitin. ChbG is essential for growth on the acetylated chitooligosaccharides chitobiose and chitotriose but is dispensable for growth on cellobiose and chitosan dimer, the deacetylated form of chitobiose. Deacetylation of chitobiose-6-P and chitotriose-6-P is necessary for both the activation of the chb promoter by the regulatory protein ChbR and the hydrolysis of phosphorylated beta-glucosides by the phospho-beta-glucosidase ChbF. Catalyzes the removal of only one acetyl group from chitobiose-6-P to yield monoacetylchitobiose-6-P, the inducer of ChbR and the substrate of ChbF. The sequence is that of Chitooligosaccharide deacetylase from Salmonella schwarzengrund (strain CVM19633).